Reading from the N-terminus, the 367-residue chain is DNA replication and repair protein RecF (367 aa).

30–37 (GANGSGKT) lines the ATP pocket.

The protein belongs to the RecF family.

Its subcellular location is the cytoplasm. The RecF protein is involved in DNA metabolism; it is required for DNA replication and normal SOS inducibility. RecF binds preferentially to single-stranded, linear DNA. It also seems to bind ATP. The chain is DNA replication and repair protein RecF from Pseudomonas fluorescens (strain SBW25).